Here is a 103-residue protein sequence, read N- to C-terminus: Large ribosomal subunit protein bL21 (103 aa).

This sequence belongs to the bacterial ribosomal protein bL21 family. As to quaternary structure, part of the 50S ribosomal subunit. Contacts protein L20.

Functionally, this protein binds to 23S rRNA in the presence of protein L20. The chain is Large ribosomal subunit protein bL21 from Mycobacterium leprae (strain Br4923).